Reading from the N-terminus, the 427-residue chain is Glutamate-1-semialdehyde 2,1-aminomutase (427 aa).

The residue at position 265 (Lys-265) is an N6-(pyridoxal phosphate)lysine.

The protein belongs to the class-III pyridoxal-phosphate-dependent aminotransferase family. HemL subfamily. As to quaternary structure, homodimer. Pyridoxal 5'-phosphate is required as a cofactor.

Its subcellular location is the cytoplasm. It catalyses the reaction (S)-4-amino-5-oxopentanoate = 5-aminolevulinate. Its pathway is porphyrin-containing compound metabolism; protoporphyrin-IX biosynthesis; 5-aminolevulinate from L-glutamyl-tRNA(Glu): step 2/2. The sequence is that of Glutamate-1-semialdehyde 2,1-aminomutase from Bordetella petrii (strain ATCC BAA-461 / DSM 12804 / CCUG 43448).